Here is a 265-residue protein sequence, read N- to C-terminus: MKKTNIYDLYKLKEQNKKFASITAYDATFANLFFKKGIRTILVGDSLGMTIQGHSSTVPVKIDEMMYHTKCVRRGAPSCLIISDLPFMSYNNINDALNNSKKLIQSGANIVKLEGGLWVSDIIHELNTRSIPVCGHIGLTPQSINMQGSYKIQGRNNNDAIRLMEEAISIEESGAKLLVLECIIQKLSNNITKKLNIPTIGIGSGKKTDGQILVMQDVLGITIEGKIPSFSKNFTKNKFGIEKAIELYIEEVENELFPSENHSFN.

Aspartate 45 and aspartate 84 together coordinate Mg(2+). 3-methyl-2-oxobutanoate-binding positions include aspartate 45–serine 46, aspartate 84, and lysine 112. Mg(2+) is bound at residue glutamate 114. Glutamate 181 (proton acceptor) is an active-site residue.

It belongs to the PanB family. Homodecamer; pentamer of dimers. It depends on Mg(2+) as a cofactor.

It is found in the cytoplasm. The catalysed reaction is 3-methyl-2-oxobutanoate + (6R)-5,10-methylene-5,6,7,8-tetrahydrofolate + H2O = 2-dehydropantoate + (6S)-5,6,7,8-tetrahydrofolate. The protein operates within cofactor biosynthesis; (R)-pantothenate biosynthesis; (R)-pantoate from 3-methyl-2-oxobutanoate: step 1/2. Functionally, catalyzes the reversible reaction in which hydroxymethyl group from 5,10-methylenetetrahydrofolate is transferred onto alpha-ketoisovalerate to form ketopantoate. The protein is 3-methyl-2-oxobutanoate hydroxymethyltransferase of Wigglesworthia glossinidia brevipalpis.